The sequence spans 138 residues: Cysteine desulfuration protein SufE (138 aa).

Catalysis depends on cysteine 51, which acts as the Cysteine persulfide intermediate.

Belongs to the SufE family. In terms of assembly, homodimer. Interacts with SufS.

It localises to the cytoplasm. The protein operates within cofactor biosynthesis; iron-sulfur cluster biosynthesis. Its function is as follows. Participates in cysteine desulfuration mediated by SufS. Cysteine desulfuration mobilizes sulfur from L-cysteine to yield L-alanine and constitutes an essential step in sulfur metabolism for biosynthesis of a variety of sulfur-containing biomolecules. Functions as a sulfur acceptor for SufS, by mediating the direct transfer of the sulfur atom from the S-sulfanylcysteine of SufS, an intermediate product of cysteine desulfuration process. The protein is Cysteine desulfuration protein SufE of Pectobacterium atrosepticum (strain SCRI 1043 / ATCC BAA-672) (Erwinia carotovora subsp. atroseptica).